The primary structure comprises 578 residues: Probable acyl-activating enzyme 12, peroxisomal (578 aa).

The short motif at Ser576–Leu578 is the Microbody targeting signal element.

This sequence belongs to the ATP-dependent AMP-binding enzyme family. In terms of tissue distribution, expressed at low levels in leaves.

It localises to the peroxisome. Functionally, may act as an acid--thiol ligase that activates carboxylic acids by forming acyl-CoAs. The chain is Probable acyl-activating enzyme 12, peroxisomal (AAE12) from Arabidopsis thaliana (Mouse-ear cress).